The primary structure comprises 1295 residues: MNEVNDFDAIRISLASPDQIRSWSYGEVTKPETINYRTLKPERDGLFCERIFGPIKDFECACGKYKRIRYKGIICDKCGVEIARAKVRRERMGHIELACPVGHIWFTRGIPSRVGLLLNLSTRSLERIIYYSHFIITAVNDEARAKAIKDLEVISSQRVADKGSEVDTRVAQMEAEDATVEAINQIRRDFSTEREQMEEDIQLLIDQLKDLQKGNLLTENQYYELKQRFSNVFEASMGAEALLKLLSYIDMDKERSKLIQETRSTSGQRRKKAGKQLQLVEAFRRSSNKPEWMIMTVLPVLPPDLRPMVQLDGGRFATSDLNDLYRRVINRNNRLQHLMEIGAPEIIIRNEKRMLQEAVDSLIDNGRRGKSVAVNGDHKAKSLSDLLRGKQGRFRQNLLGKRVDYSGRSVIVVGPSLKLSQCGLPRRMALELFKPFVMHRLVRDGLAPNIKSARRLVERARPEVYDILEEVVKDRPVLLNRAPTLHRLSIQAFEPVLIDGSALRLHPLVCSAFNADFDGDQMAVHVPLSKAAVKEARETMLSIHNMMLPSSGEPVVSPSLDMVFGCYYLTTTRPGAKGEGKIFGDFEEAKRYYEMGIIDLRAIIKVRDGKGNMLETTTGRIIFNDVLPKAVEFQNMDIPKSAIKKIIGRCYKILSSQDMAVMLDKIKELGFKFATSSGISIAMSDISVPREKTKLVAAADERTAIAEGQFARGLITEDERYNSIIETWMETTDRITDAIQAGFDKQGSVYMMANSGAKGNISQIRQMAGLRGLMTNPSGRIIDFPIKSSLREGLTALEYFISTHGARKGLADTALRTSGSGYLTRRLIDVTQDVIILQEDCGTANGTWIIEPKEKGMLPPLVDRILGRWTAHNVVHPQTGEIIVDNNEEIDEIKAKAIGEAGITEVFVRSPLTCESTHGMCRRCYGRDLGRVRLVDMNTAVGIIAAQSIGEPGTQLTLRTFHTGGVVGVDITTGLPRVEELFEARPPKVQSIISEIDGVVEVIENENGRHIRIASDEVYQDEYELPSGWKTQVQSRQWVDSGMVLASPELEGKSKAVVQSDQNVVARVAGEVTIEGNLITIKYSESEEREYTIPAAMQIKVKTGDTIRAGQQLTDGSINPQDILSILGRDAVQKYLVEEVQKVYYSQGVHINDKHIEVIARQMLIKVRIDSSGDTDLVPGELVDKFRYEDINAKVLAEGGEPATAHTVLMGITRASLSTESWLAAASFQETTRVLTDAAIYGRVDKLSGLKENVIIGKLIPAQCKSCKEATIERAERIAAAASAPAMSGLPENCL.

Zn(2+) contacts are provided by C60, C62, C75, and C78. Residues D516, D518, and D520 each contribute to the Mg(2+) site. Zn(2+) is bound by residues C841, C914, C921, and C924.

Belongs to the RNA polymerase beta' chain family. In terms of assembly, the RNAP catalytic core consists of 2 alpha, 1 beta, 1 beta' and 1 omega subunit. When a sigma factor is associated with the core the holoenzyme is formed, which can initiate transcription. The cofactor is Mg(2+). It depends on Zn(2+) as a cofactor.

The catalysed reaction is RNA(n) + a ribonucleoside 5'-triphosphate = RNA(n+1) + diphosphate. Functionally, DNA-dependent RNA polymerase catalyzes the transcription of DNA into RNA using the four ribonucleoside triphosphates as substrates. The chain is DNA-directed RNA polymerase subunit beta' from Dehalococcoides mccartyi (strain ATCC BAA-2100 / JCM 16839 / KCTC 5957 / BAV1).